The chain runs to 272 residues: 3-methyl-2-oxobutanoate hydroxymethyltransferase (272 aa).

Mg(2+) contacts are provided by D43 and D82. 3-methyl-2-oxobutanoate is bound by residues 43-44 (DS), D82, and K112. E114 lines the Mg(2+) pocket. E179 (proton acceptor) is an active-site residue.

This sequence belongs to the PanB family. Homodecamer; pentamer of dimers. Mg(2+) is required as a cofactor.

It localises to the cytoplasm. The catalysed reaction is 3-methyl-2-oxobutanoate + (6R)-5,10-methylene-5,6,7,8-tetrahydrofolate + H2O = 2-dehydropantoate + (6S)-5,6,7,8-tetrahydrofolate. The protein operates within cofactor biosynthesis; (R)-pantothenate biosynthesis; (R)-pantoate from 3-methyl-2-oxobutanoate: step 1/2. Its function is as follows. Catalyzes the reversible reaction in which hydroxymethyl group from 5,10-methylenetetrahydrofolate is transferred onto alpha-ketoisovalerate to form ketopantoate. In Staphylococcus aureus (strain MRSA252), this protein is 3-methyl-2-oxobutanoate hydroxymethyltransferase.